The following is a 324-amino-acid chain: NADH-ubiquinone oxidoreductase chain 1 (324 aa).

8 helical membrane-spanning segments follow: residues M10–V30, F76–L96, L107–G127, V143–L163, P178–A198, L229–F249, E260–V280, and F300–G320.

The protein belongs to the complex I subunit 1 family.

Its subcellular location is the mitochondrion inner membrane. The catalysed reaction is a ubiquinone + NADH + 5 H(+)(in) = a ubiquinol + NAD(+) + 4 H(+)(out). Its function is as follows. Core subunit of the mitochondrial membrane respiratory chain NADH dehydrogenase (Complex I) that is believed to belong to the minimal assembly required for catalysis. Complex I functions in the transfer of electrons from NADH to the respiratory chain. The immediate electron acceptor for the enzyme is believed to be ubiquinone. In Excalfactoria chinensis (Blue-breasted quail), this protein is NADH-ubiquinone oxidoreductase chain 1 (MT-ND1).